We begin with the raw amino-acid sequence, 98 residues long: Protein translation factor SUI1 homolog (98 aa).

Belongs to the SUI1 family.

In Pyrococcus abyssi (strain GE5 / Orsay), this protein is Protein translation factor SUI1 homolog.